We begin with the raw amino-acid sequence, 954 residues long: Valine--tRNA ligase (954 aa).

The 'HIGH' region motif lies at 48-58; that stretch reads PNVTGSLHMGH. Positions 560–564 match the 'KMSKS' region motif; it reads KMSKS. Residue Lys563 participates in ATP binding. Residues 883-954 are a coiled coil; sequence AGFINKEAEL…QTQYQAIENL (72 aa).

The protein belongs to the class-I aminoacyl-tRNA synthetase family. ValS type 1 subfamily. In terms of assembly, monomer.

It localises to the cytoplasm. It carries out the reaction tRNA(Val) + L-valine + ATP = L-valyl-tRNA(Val) + AMP + diphosphate. Functionally, catalyzes the attachment of valine to tRNA(Val). As ValRS can inadvertently accommodate and process structurally similar amino acids such as threonine, to avoid such errors, it has a 'posttransfer' editing activity that hydrolyzes mischarged Thr-tRNA(Val) in a tRNA-dependent manner. The sequence is that of Valine--tRNA ligase from Actinobacillus pleuropneumoniae serotype 5b (strain L20).